We begin with the raw amino-acid sequence, 714 residues long: Fumarate reductase flavoprotein subunit (714 aa).

FAD is bound by residues 13 to 16 (GGLA), 42 to 44 (SHS), and 49 to 50 (GG). Residue His43 is modified to Tele-8alpha-FAD histidine. Catalysis depends on residues His257 and Arg273. FAD contacts are provided by residues Glu420 and 436 to 437 (SV).

Belongs to the FAD-dependent oxidoreductase 2 family. FRD/SDH subfamily. As to quaternary structure, part of an enzyme complex containing three subunits: a flavoprotein (frdA), an iron-sulfur protein (frdB), and diheme cytochrome b (frdC). Requires FAD as cofactor.

The protein resides in the cell inner membrane. The enzyme catalyses a quinone + succinate = fumarate + a quinol. In terms of biological role, the fumarate reductase enzyme complex is required for fumarate respiration. The sequence is that of Fumarate reductase flavoprotein subunit (frdA) from Helicobacter pylori (strain J99 / ATCC 700824) (Campylobacter pylori J99).